The chain runs to 545 residues: Hydroxylamine reductase (545 aa).

Residues Cys7, Cys10, Cys19, and Cys25 each contribute to the [4Fe-4S] cluster site. 8 residues coordinate hybrid [4Fe-2O-2S] cluster: His241, Glu265, Cys309, Cys400, Cys428, Cys453, Glu488, and Lys490. Cys400 carries the post-translational modification Cysteine persulfide; in oxidized form.

Belongs to the HCP family. As to quaternary structure, monomer. The cofactor is [4Fe-4S] cluster. Requires hybrid [4Fe-2O-2S] cluster as cofactor.

The protein localises to the cytoplasm. It catalyses the reaction A + NH4(+) + H2O = hydroxylamine + AH2 + H(+). In terms of biological role, catalyzes the reduction of hydroxylamine to form NH(3) and H(2)O. This is Hydroxylamine reductase from Desulfovibrio desulfuricans (strain ATCC 27774 / DSM 6949 / MB).